We begin with the raw amino-acid sequence, 97 residues long: MEIRKSAVAGTLESSDVQIMLSAGNNGIEFELVSDVAKQFGDAIKETITDVLNTYGVTDAAVSVVDKGALDMVIRARAIAVVQRALDIVDTPNWEVL.

The residue at position 14 (Ser-14) is an O-(phosphoribosyl dephospho-coenzyme A)serine.

This sequence belongs to the CitD family. In terms of assembly, oligomer with a subunit composition of (alpha,beta,gamma)6.

The protein resides in the cytoplasm. Covalent carrier of the coenzyme of citrate lyase. This Weissella paramesenteroides (Leuconostoc paramesenteroides) protein is Citrate lyase acyl carrier protein (citD).